We begin with the raw amino-acid sequence, 542 residues long: TNF receptor-associated factor 6 (542 aa).

A disordered region spans residues 32–54 (ESFLSPTENPSTISVSSSMPPDQ). A compositionally biased stretch (polar residues) spans 35 to 52 (LSPTENPSTISVSSSMPP). An RING-type; degenerate zinc finger spans residues 71–110 (CPICLMGLRSAVQTPCGHRFCDSCIRKSIRDTGQKCPVDN). 2 TRAF-type zinc fingers span residues 151 to 203 (KHLS…AVKQ) and 204 to 260 (NHEQ…NELA). Residues 311–373 (QCKQELLNLR…STRELEAQQY (63 aa)) are a coiled coil. Residues 374 to 520 (QGIYVWRVEN…EDVLLVRCEV (147 aa)) enclose the MATH domain. 489–496 (PKGFGYVT) contributes to the substrate binding site.

It belongs to the TNF receptor-associated factor family. A subfamily. In terms of assembly, homotrimer. Homooligomer.

The protein localises to the cytoplasm. It is found in the cell cortex. The protein resides in the nucleus. It localises to the lipid droplet. The enzyme catalyses S-ubiquitinyl-[E2 ubiquitin-conjugating enzyme]-L-cysteine + [acceptor protein]-L-lysine = [E2 ubiquitin-conjugating enzyme]-L-cysteine + N(6)-ubiquitinyl-[acceptor protein]-L-lysine.. The protein operates within protein modification; protein ubiquitination. In terms of biological role, E3 ubiquitin ligase that, together with UBE2N and UBE2V1, mediates the synthesis of 'Lys-63'-linked-polyubiquitin chains conjugated to proteins, such as IKBKG, IRAK1, AKT1 and AKT2. Also mediates ubiquitination of free/unanchored polyubiquitin chain that leads to MAP3K7 activation. The sequence is that of TNF receptor-associated factor 6 (traf6) from Danio rerio (Zebrafish).